The sequence spans 392 residues: Ribosomal RNA large subunit methyltransferase G (392 aa).

Belongs to the methyltransferase superfamily. RlmG family.

Its subcellular location is the cytoplasm. The enzyme catalyses guanosine(1835) in 23S rRNA + S-adenosyl-L-methionine = N(2)-methylguanosine(1835) in 23S rRNA + S-adenosyl-L-homocysteine + H(+). Specifically methylates the guanine in position 1835 (m2G1835) of 23S rRNA. The chain is Ribosomal RNA large subunit methyltransferase G from Colwellia psychrerythraea (strain 34H / ATCC BAA-681) (Vibrio psychroerythus).